The following is a 204-amino-acid chain: Hydrophilin YNL190W (204 aa).

A signal peptide spans 1-20 (MKFSSVTAITLATVATVATA). Positions 35–46 (SDGSLTTTTSTH) are enriched in low complexity. The interval 35 to 179 (SDGSLTTTTS…ARKNNAAPGP (145 aa)) is disordered. The span at 47–59 (TTHKYGKFNKTSK) shows a compositional bias: basic residues. 11 N-linked (GlcNAc...) asparagine glycosylation sites follow: asparagine 55, asparagine 64, asparagine 75, asparagine 84, asparagine 95, asparagine 104, asparagine 115, asparagine 124, asparagine 135, asparagine 144, and asparagine 155. Over residues 67 to 79 (GTHKYGKFNKTSK) the composition is skewed to basic residues. Positions 87 to 99 (GTHKYGKFNKTSK) are enriched in basic residues. Positions 107-119 (GTHKYGKFNKTSK) are enriched in basic residues. Residues 127–139 (GTHKYGKFNKTSK) show a composition bias toward basic residues. Over residues 147–156 (GTHKYGKFNK) the composition is skewed to basic residues. Asparagine 174 is lipidated: GPI-anchor amidated asparagine. Residues 175 to 204 (AAPGPSNFNSIKLFGVTAGSAAVAGALLLL) constitute a propeptide, removed in mature form.

Belongs to the PGA14 family. The GPI-anchor is attached to the protein in the endoplasmic reticulum and serves to target the protein to the cell surface. There, the glucosamine-inositol phospholipid moiety is cleaved off and the GPI-modified mannoprotein is covalently attached via its lipidless GPI glycan remnant to the 1,6-beta-glucan of the outer cell wall layer.

It is found in the secreted. The protein localises to the cell wall. The protein resides in the membrane. Hydrophilin which is essential to overcome the simple stress of the desiccation-rehydration process. This Saccharomyces cerevisiae (strain ATCC 204508 / S288c) (Baker's yeast) protein is Hydrophilin YNL190W.